The following is a 58-amino-acid chain: Conotoxin Leo-T2 (58 aa).

Positions 1–22 (MRCLPVFIILPLLIPSAPSVDA) are cleaved as a signal peptide. Positions 23-47 (QPMTEDDVPLASFHEQTLQELWNKR) are excised as a propeptide.

This sequence belongs to the conotoxin T superfamily. Contains 2 disulfide bonds that can be either 'C1-C3, C2-C4' or 'C1-C4, C2-C3', since these disulfide connectivities have been observed for conotoxins with cysteine framework V (for examples, see AC P0DQQ7 and AC P81755). In terms of tissue distribution, expressed by the venom duct.

It localises to the secreted. The chain is Conotoxin Leo-T2 from Conus leopardus (Leopard cone).